The sequence spans 232 residues: Large ribosomal subunit protein uL1 (232 aa).

Belongs to the universal ribosomal protein uL1 family. Part of the 50S ribosomal subunit.

Functionally, binds directly to 23S rRNA. The L1 stalk is quite mobile in the ribosome, and is involved in E site tRNA release. In terms of biological role, protein L1 is also a translational repressor protein, it controls the translation of the L11 operon by binding to its mRNA. This chain is Large ribosomal subunit protein uL1, found in Dichelobacter nodosus (strain VCS1703A).